A 249-amino-acid polypeptide reads, in one-letter code: 5'-nucleotidase SurE (249 aa).

Positions 9, 10, 40, and 92 each coordinate a divalent metal cation.

Belongs to the SurE nucleotidase family. A divalent metal cation is required as a cofactor.

Its subcellular location is the cytoplasm. It carries out the reaction a ribonucleoside 5'-phosphate + H2O = a ribonucleoside + phosphate. Its function is as follows. Nucleotidase that shows phosphatase activity on nucleoside 5'-monophosphates. The chain is 5'-nucleotidase SurE from Shewanella baltica (strain OS195).